The chain runs to 504 residues: Arabinose import ATP-binding protein AraG (504 aa).

ABC transporter domains are found at residues 8–243 and 256–499; these read LSFR…MVGR and YGEE…MPKV. 40–47 is a binding site for ATP; it reads GENGAGKS.

This sequence belongs to the ABC transporter superfamily. Arabinose importer (TC 3.A.1.2.2) family. In terms of assembly, the complex is composed of two ATP-binding proteins (AraG), two transmembrane proteins (AraH) and a solute-binding protein (AraF).

The protein localises to the cell inner membrane. The enzyme catalyses L-arabinose(out) + ATP + H2O = L-arabinose(in) + ADP + phosphate + H(+). In terms of biological role, part of the ABC transporter complex AraFGH involved in arabinose import. Responsible for energy coupling to the transport system. This Escherichia coli O157:H7 protein is Arabinose import ATP-binding protein AraG.